Consider the following 274-residue polypeptide: Oxidoreductase BOA17 (274 aa).

Positions 14, 32, 57, 84, and 117 each coordinate NADP(+). Active-site proton donor residues include Ser135 and Tyr149. Residues Tyr149, Lys153, Ile182, and Thr184 each coordinate NADP(+). Catalysis depends on Lys153, which acts as the Lowers pKa of active site Tyr.

It belongs to the short-chain dehydrogenases/reductases (SDR) family.

The protein operates within polyketide biosynthesis. In terms of biological role, oxidoreductase; part of the gene cluster B that mediates the biosynthesis of botcinic acid and its botcinin derivatives, acetate-derived polyketides that contribute to virulence when combined with the sesquiterpene botrydial. Botcinic acid and its derivatives have been shown to induce chlorosis and necrosis during host plant infection, but also have antifungal activities. Two polyketide synthases, BOA6 and BOA9, are involved in the biosynthesis of botcinins. BOA6 mediates the formation of the per-methylated tetraketide core by condensation of four units of malonyl-CoA with one unit of acetyl-CoA, which would be methylated in activated methylene groups to yield a bicyclic acid intermediate that could then either be converted to botrylactone derivatives or lose the starter acetate unit through a retro-Claisen type C-C bond cleavage to yield botcinin derivatives. The second polyketide synthase, BOA9, is probably required for the biosynthesis of the tetraketide side chain of botcinins. The methyltransferase (MT) domain within BOA6 is probably responsible for the incorporation of four methyl groups. The trans-enoyl reductase BOA5 might take over the enoyl reductase function of BOA6 that misses an ER domain. The monooxygenases BOA2, BOA3 and BOA4 might be involved in further hydroxylations at C4, C5 and C8, whereas BOA7, close to BOA9, could potentially be involved in the hydroxylation at C4 in the side chain of botcinins. In Botryotinia fuckeliana (strain B05.10) (Noble rot fungus), this protein is Oxidoreductase BOA17.